Reading from the N-terminus, the 405-residue chain is Serine/threonine-protein kinase SSN3 (405 aa).

In terms of domain architecture, Protein kinase spans 40 to 350 (YEIIGYIAAG…ANDALLHPYF (311 aa)). ATP contacts are provided by residues 46 to 54 (IAAGTYGRV) and K71. Residue D173 is the Proton acceptor of the active site. The interval 377–405 (DSDIKTMTYQGTKRGSQGGDNLHPRKKQK) is disordered. A compositionally biased stretch (polar residues) spans 381–391 (KTMTYQGTKRG).

The protein belongs to the protein kinase superfamily. CMGC Ser/Thr protein kinase family. CDC2/CDKX subfamily. As to quaternary structure, component of the srb8-11 complex, a regulatory module of the Mediator complex. Mg(2+) is required as a cofactor.

The protein resides in the nucleus. The catalysed reaction is L-seryl-[protein] + ATP = O-phospho-L-seryl-[protein] + ADP + H(+). It carries out the reaction L-threonyl-[protein] + ATP = O-phospho-L-threonyl-[protein] + ADP + H(+). The enzyme catalyses [DNA-directed RNA polymerase] + ATP = phospho-[DNA-directed RNA polymerase] + ADP + H(+). Its function is as follows. Component of the srb8-11 complex. The srb8-11 complex is a regulatory module of the Mediator complex which is itself dependent transcription. The srb8-11 complex may be involved in the transcriptional repression of a subset of genes regulated by Mediator. It may inhibit the association of the Mediator complex with RNA polymerase II to form the holoenzyme complex. The srb8-11 complex phosphorylates the C-terminal domain (CTD) of the largest subunit of RNA polymerase II. This chain is Serine/threonine-protein kinase SSN3 (SSN3), found in Yarrowia lipolytica (strain CLIB 122 / E 150) (Yeast).